The chain runs to 359 residues: Phospho-N-acetylmuramoyl-pentapeptide-transferase (359 aa).

Transmembrane regions (helical) follow at residues 3–23 (QILVAVTVALVVSILLTPALI), 55–75 (VAIVAGIWAGYLGTHLAGLAF), 80–100 (VSASGVLVLGLATALGGVGFL), 117–137 (TAKTVGQITAAVLFGVLVLQF), 156–176 (IATVTLAPALFVLFCMVIVSA), 187–207 (LDGLAAGSMAMVTAAYVLITF), 231–251 (LTLIAAATVGACIGFLWWNAA), 255–275 (IFMGDTGSLALGGVIAGLSVT), 280–300 (ILAVVLGSLFVAEITSVVLQI), and 334–354 (FWLLTAIACGLGVVLFYGEWL).

The protein belongs to the glycosyltransferase 4 family. MraY subfamily. The cofactor is Mg(2+).

It is found in the cell membrane. It catalyses the reaction UDP-N-acetyl-alpha-D-muramoyl-L-alanyl-gamma-D-glutamyl-meso-2,6-diaminopimeloyl-D-alanyl-D-alanine + di-trans,octa-cis-undecaprenyl phosphate = di-trans,octa-cis-undecaprenyl diphospho-N-acetyl-alpha-D-muramoyl-L-alanyl-D-glutamyl-meso-2,6-diaminopimeloyl-D-alanyl-D-alanine + UMP. It participates in cell wall biogenesis; peptidoglycan biosynthesis. Functionally, catalyzes the initial step of the lipid cycle reactions in the biosynthesis of the cell wall peptidoglycan: transfers peptidoglycan precursor phospho-MurNAc-pentapeptide from UDP-MurNAc-pentapeptide onto the lipid carrier undecaprenyl phosphate, yielding undecaprenyl-pyrophosphoryl-MurNAc-pentapeptide, known as lipid I. The sequence is that of Phospho-N-acetylmuramoyl-pentapeptide-transferase from Mycobacterium leprae (strain TN).